Consider the following 446-residue polypeptide: Tektin-4 (446 aa).

Coiled coils occupy residues 182–215 (IRNV…MDYS), 297–346 (DAIA…NDKS), and 378–422 (SEVG…ANSI).

It belongs to the tektin family.

It is found in the cytoplasm. It localises to the cytoskeleton. Its subcellular location is the cilium axoneme. The protein localises to the cell projection. The protein resides in the cilium. It is found in the flagellum. In terms of biological role, microtubule inner protein (MIP) part of the dynein-decorated doublet microtubules (DMTs) in cilia and flagellar axoneme. Forms filamentous polymers in the walls of ciliary and flagellar microtubules. Contributes to normal sperm motility. The polypeptide is Tektin-4 (tekt4) (Xenopus laevis (African clawed frog)).